A 683-amino-acid polypeptide reads, in one-letter code: MAETKPTYYITTPIYYPSGKLHIGNSYTTIACDTLARYKRAMGYDVYFLTGTDEHGLKIEEKAEKLNTDPKSYVDGMAKQIKDLWQLLEISNDKFIRTTDDYHERAVQEIFDRLLKNGDIYLGEYEGWYSVDDEEYFTETQLAEVFRDDNGKVIGGKAPSGHEVELVKEQSYFFKMSKYADWLLDYYQSHPDFIEPANRMTEMINNFIKPGLEDLAVSRTSFTWGVPVKSDPKHVVYVWIDALTNYITALGYATGDSEDLFNKFWPADVQMVGKEIVRFHTIYWPIILHALGLPLPKKVFGHGWLLMKDGKMSKSKGNVIYPETLVERYGLDALRYYLVKAMPYGNDGLFTPEDFVARVNYDLANDLGNLLNRTIAMINKYEDGQLPAFKAGVTEFDADLEATAATTIKNFNACMDSLHLSDALAEVWKLVSRTNKYIDETAPWQLAKSDDANDADKLASVMAHLAASLRVIASLISPVMTHAPKEIFTQLGLDPATLAIADLQLADLPAGAQVVAKGTPIFPRVDMDAEVEFLKGKMTKSDKQKGRKAMENAKHEAEVEQGWNPAETNLNLTKPAITIDDFDKVELKVAEVITVQKLKGADKLLQFRLDAGDADHRQILSGIAKWYPEPEELIGKKVIIVGNLKPRKLRGEMSQGMLLSAEHDGQVQLITVPDNMVNGSLIS.

The short motif at 15 to 25 (YYPSGKLHIGN) is the 'HIGH' region element. A 'KMSKS' region motif is present at residues 311–315 (KMSKS). Lys314 serves as a coordination point for ATP. In terms of domain architecture, tRNA-binding spans 581–683 (DFDKVELKVA…DNMVNGSLIS (103 aa)).

Belongs to the class-I aminoacyl-tRNA synthetase family. MetG type 2B subfamily. Homodimer.

The protein resides in the cytoplasm. The enzyme catalyses tRNA(Met) + L-methionine + ATP = L-methionyl-tRNA(Met) + AMP + diphosphate. Functionally, is required not only for elongation of protein synthesis but also for the initiation of all mRNA translation through initiator tRNA(fMet) aminoacylation. The protein is Methionine--tRNA ligase of Lactiplantibacillus plantarum (strain ATCC BAA-793 / NCIMB 8826 / WCFS1) (Lactobacillus plantarum).